The chain runs to 957 residues: MLQTLQKLLGDPNDRKIRQYRPVVKLINSLEIEIASLSDAELKAKTTEFRQRLDRGESLDDLLPEAFAVVREAAKRVLNLRHYDVQLIGGMVLHEGQIAEMKTGEGKTLVATLPAYLNGLTGKGVHIVTVNGYLARRDSEWMGQVHRFLGLTVGLVQEGMSPEEKRRSYNCDITYCTNSELGFDYLRDNMATDIKEVMQRPFNYCIIDEVDSILIDEARTPLIISGQVARPSEKYLRAAQVARELIRDEHYEVDEKARNVILTDEGFEAAERLLGVSDLFDPKDPWAHFVFNAVKAKELFIKDVHYIVRNQEVVIVDEFTGRVLPGRRWSDGLHQAVEAKEGVPIQSESQTLATITYQNLFLLYPKLSGMTGTARTEEAEFGKTYNLEVTVIPTNRPIRRKDAPDLVYKTERGKWQAVAEEIAHMHAQGRPVLVGTTSVEKSERLSAMLKEMGIPHNLLNAKPENVEREAEIIAQAGRKGAVTIATNMAGRGTDIILGGNAEYMARLKLRERLMPKLAQLDADNPLGSVQMVGRGGGQGFGGTAPKPKKSWTVVSPNFYPCELSARTNQALDEVVAAAVTKYGLNRLPELVVEDLIAVASEKAPVQDPLILQLREVYNSIKAEYEKITEAEHEEVVRLGGLHVIGTERHESRRIDNQLRGRAGRQGDPGSSRFFLSLEDNLLKIFGGERVAKLMDMFRVEEDMPIEHPLLSSSLENAQRKVEVYYFDMRKQVFEYDEVMNNQRRAIYSERRRILEGENLKTKILDYVRKTVGEIVRAHVNPELPPEEWEIDKLTAKMQEFVPLLKQNLKVEDLQDLSYEQILDYLIKQAELAYEAKEAFLDTFEPGLMRKAERFFLLQQVDTLWREHLQQMEALREAVGLRGYGQKDPLIEYKNEGYELFLEMMDNIRRNTVYNLFIFTPQIVQVPQASRPAPAPTAAASPDPSSASGVVEADFTEE.

ATP is bound by residues Q86, 104-108, and D494; that span reads GEGKT. Over residues 929–947 the composition is skewed to low complexity; that stretch reads SRPAPAPTAAASPDPSSAS. Positions 929–957 are disordered; it reads SRPAPAPTAAASPDPSSASGVVEADFTEE.

The protein belongs to the SecA family. In terms of assembly, monomer and homodimer. Part of the essential Sec protein translocation apparatus which comprises SecA, SecYEG and auxiliary proteins SecDF. Other proteins may also be involved.

Its subcellular location is the cell inner membrane. The protein localises to the cellular thylakoid membrane. It is found in the cytoplasm. It carries out the reaction ATP + H2O + cellular proteinSide 1 = ADP + phosphate + cellular proteinSide 2.. Functionally, part of the Sec protein translocase complex. Interacts with the SecYEG preprotein conducting channel. Has a central role in coupling the hydrolysis of ATP to the transfer of proteins into and across the cell membrane, serving as an ATP-driven molecular motor driving the stepwise translocation of polypeptide chains across the membrane. In terms of biological role, probably participates in protein translocation into and across both the cytoplasmic and thylakoid membranes in cyanobacterial cells. This Synechococcus sp. (strain JA-2-3B'a(2-13)) (Cyanobacteria bacterium Yellowstone B-Prime) protein is Protein translocase subunit SecA.